Consider the following 176-residue polypeptide: Putative L,D-transpeptidase YqjB (176 aa).

Residues 1-25 (MRFFLCSIFMMISPIWPLGENPLPG) form the signal peptide. In terms of domain architecture, L,D-TPase catalytic spans 27-151 (PYVIVNKRTN…IPVGTRVLIT (125 aa)). The active-site Proton donor/acceptor is the His-111. Residue Cys-127 is the Nucleophile of the active site.

Belongs to the YkuD family.

It functions in the pathway cell wall biogenesis; peptidoglycan biosynthesis. The polypeptide is Putative L,D-transpeptidase YqjB (yqjB) (Bacillus subtilis (strain 168)).